We begin with the raw amino-acid sequence, 637 residues long: 1-deoxy-D-xylulose-5-phosphate synthase (637 aa).

Thiamine diphosphate is bound by residues His-76 and 117 to 119 (GHS). Asp-148 is a Mg(2+) binding site. Thiamine diphosphate is bound by residues 149–150 (GA), Asn-177, Tyr-294, and Glu-381. Asn-177 contacts Mg(2+).

The protein belongs to the transketolase family. DXPS subfamily. In terms of assembly, homodimer. It depends on Mg(2+) as a cofactor. Requires thiamine diphosphate as cofactor.

The catalysed reaction is D-glyceraldehyde 3-phosphate + pyruvate + H(+) = 1-deoxy-D-xylulose 5-phosphate + CO2. It functions in the pathway metabolic intermediate biosynthesis; 1-deoxy-D-xylulose 5-phosphate biosynthesis; 1-deoxy-D-xylulose 5-phosphate from D-glyceraldehyde 3-phosphate and pyruvate: step 1/1. Functionally, catalyzes the acyloin condensation reaction between C atoms 2 and 3 of pyruvate and glyceraldehyde 3-phosphate to yield 1-deoxy-D-xylulose-5-phosphate (DXP). This chain is 1-deoxy-D-xylulose-5-phosphate synthase, found in Neisseria gonorrhoeae (strain ATCC 700825 / FA 1090).